Consider the following 571-residue polypeptide: Putative diflavin flavoprotein A 1 (571 aa).

The interval 43-236 (ENGTTYNSFL…PPVQLVATGH (194 aa)) is zinc metallo-hydrolase. Residues histidine 92, glutamate 94, aspartate 96, histidine 159, aspartate 178, and histidine 236 each coordinate Fe cation. The Flavodoxin-like domain maps to 265-426 (VAIFYAANYG…DLDKALGRLS (162 aa)). A flavodoxin-reductase-like region spans residues 427 to 571 (GGLYIITAQK…VHHRKVGNHY (145 aa)).

It in the N-terminal section; belongs to the zinc metallo-hydrolase group 3 family. This sequence in the C-terminal section; belongs to the flavodoxin reductase family. It depends on Fe cation as a cofactor.

Its function is as follows. Mediates electron transfer from NADH to oxygen, reducing it to water. This modular protein has 3 redox cofactors, in other organisms the same activity requires 2 or 3 proteins. The protein is Putative diflavin flavoprotein A 1 (dfa1) of Thermosynechococcus vestitus (strain NIES-2133 / IAM M-273 / BP-1).